Here is a 279-residue protein sequence, read N- to C-terminus: Methyltransferase trt5 (279 aa).

Residues 124–125 and 152–153 each bind S-adenosyl-L-methionine; these read DI and DV.

The protein belongs to the class I-like SAM-binding methyltransferase superfamily. In terms of assembly, homodimer.

It functions in the pathway secondary metabolite biosynthesis; terpenoid biosynthesis. Methyltransferase; part of the gene cluster that mediates the biosynthesis of terretonin, a fungal meroterpenoid that acts as a mycotoxin. The first step of the pathway is the synthesis of 3,5-dimethylorsellinic acid (DMOA) by the polyketide synthase trt4. DMOA is then prenylated into farnesyl-DMOA by the polyprenyl transferase trt2. Methylation by the methyltransferase trt5 then leads to farnesyl-DMOA methyl ester which is further subject to epoxidation by the FAD-dependent monooxygenase trt8 to yield epoxyfarnesyl-DMOA methyl ester. Cyclization of epoxyfarnesyl-DMOA methyl ester by the terpene cyclase trt1 leads to a tetracycle intermediate which is in turn converted to preterretonin. Dehydrogenase trt9 comes next to transform preterretonin to preterrenoid. The FAD-dependent monooxygenase trt3 is then required for the C-hydroxylation at C16 of preterrenoid to yield terrenoid. The cytochrome P450 trt6 catalyzes three successive oxidations to transform terrenoid into an unstable intermediate, which then undergoes the D-ring expansion and unusual rearrangement of the methoxy group to afford the core skeleton of terretonin. Trt14 catalyzes the D-ring expansion of terretonin involving intramolecular methoxy rearrangement as well as the hydrolysis of the expanded D-ring and the methyl ester moiety. Finally, the nonheme iron-dependent dioxygenase trt7 accomplishes the last two oxidation reactions steps to complete the biosynthesis of terretonin. Terretonin C is produced via spontaneous decarboxylation of the terretonin precursor. Another shunt product of the terretonin biosynthesis is dihydrofarnesyl-DMOA, derived from epoxyfarnesyl-DMOA through hydrolysis of the epoxide. The sequence is that of Methyltransferase trt5 from Aspergillus terreus (strain NIH 2624 / FGSC A1156).